The following is a 734-amino-acid chain: Photosystem I P700 chlorophyll a apoprotein A2 (734 aa).

Helical transmembrane passes span 46-69 (IFASHFGQLAIIFLWTSGNLFHVA), 135-158 (LYTGALFLLIVSAVALFAGWLHLQ), 175-199 (LNHHLSGLFGVSSLAWTGHLVHVAI), 273-291 (IAHHHLAIAVLFIIAGHMY), 330-353 (LHFQLGLALASLGVVTSLVAQHMY), 369-395 (AALYTHHQYIAGFIMTGAFAHGAIFFV), 417-439 (AIISHLSWASLFLGFHTLGLYVH), and 517-535 (FLVHHAIALGLHTTTLILV). Positions 559 and 568 each coordinate [4Fe-4S] cluster. 2 helical membrane passes run 575-596 (AFYLAVFWMLNTIGWVTFYWHW) and 643-665 (LSVWAWMFLFGHLVWATGFMFLI). H654, M662, and Y670 together coordinate chlorophyll a. W671 lines the phylloquinone pocket. Residues 707–727 (LVGLAHFSVGYVLTYAAFLIA) form a helical membrane-spanning segment.

The protein belongs to the PsaA/PsaB family. As to quaternary structure, the PsaA/B heterodimer binds the P700 chlorophyll special pair and subsequent electron acceptors. PSI consists of a core antenna complex that captures photons, and an electron transfer chain that converts photonic excitation into a charge separation. The eukaryotic PSI reaction center is composed of at least 11 subunits. P700 is a chlorophyll a/chlorophyll a' dimer, A0 is one or more chlorophyll a, A1 is one or both phylloquinones and FX is a shared 4Fe-4S iron-sulfur center. serves as cofactor.

The protein localises to the plastid. It localises to the chloroplast thylakoid membrane. The enzyme catalyses reduced [plastocyanin] + hnu + oxidized [2Fe-2S]-[ferredoxin] = oxidized [plastocyanin] + reduced [2Fe-2S]-[ferredoxin]. In terms of biological role, psaA and PsaB bind P700, the primary electron donor of photosystem I (PSI), as well as the electron acceptors A0, A1 and FX. PSI is a plastocyanin-ferredoxin oxidoreductase, converting photonic excitation into a charge separation, which transfers an electron from the donor P700 chlorophyll pair to the spectroscopically characterized acceptors A0, A1, FX, FA and FB in turn. Oxidized P700 is reduced on the lumenal side of the thylakoid membrane by plastocyanin. This Chlorokybus atmophyticus (Soil alga) protein is Photosystem I P700 chlorophyll a apoprotein A2.